Here is a 111-residue protein sequence, read N- to C-terminus: Ig kappa chain V-III region PC 3741/TEPC 111 (111 aa).

Residues 1-23 are framework-1; sequence DIVLTQSPASLAVSLGQRATISC. Residues Cys-23 and Cys-92 are joined by a disulfide bond. A complementarity-determining-1 region spans residues 24 to 38; the sequence is RASESVDSYGNSFMH. The tract at residues 39 to 53 is framework-2; that stretch reads WYQQKPGQPPKLLIY. The tract at residues 54–60 is complementarity-determining-2; that stretch reads RASNLES. The interval 61-92 is framework-3; that stretch reads GIPARFSGSGSRTDFTLTINPVEADDVATYYC. A complementarity-determining-3 region spans residues 93–101; the sequence is QQSNEDPYT. The interval 102–111 is framework-4; it reads FGGGTKLEIK.

This Mus musculus (Mouse) protein is Ig kappa chain V-III region PC 3741/TEPC 111.